Here is a 98-residue protein sequence, read N- to C-terminus: Aspartyl/glutamyl-tRNA(Asn/Gln) amidotransferase subunit C (98 aa).

This sequence belongs to the GatC family. Heterotrimer of A, B and C subunits.

The enzyme catalyses L-glutamyl-tRNA(Gln) + L-glutamine + ATP + H2O = L-glutaminyl-tRNA(Gln) + L-glutamate + ADP + phosphate + H(+). It carries out the reaction L-aspartyl-tRNA(Asn) + L-glutamine + ATP + H2O = L-asparaginyl-tRNA(Asn) + L-glutamate + ADP + phosphate + 2 H(+). Its function is as follows. Allows the formation of correctly charged Asn-tRNA(Asn) or Gln-tRNA(Gln) through the transamidation of misacylated Asp-tRNA(Asn) or Glu-tRNA(Gln) in organisms which lack either or both of asparaginyl-tRNA or glutaminyl-tRNA synthetases. The reaction takes place in the presence of glutamine and ATP through an activated phospho-Asp-tRNA(Asn) or phospho-Glu-tRNA(Gln). This Roseiflexus castenholzii (strain DSM 13941 / HLO8) protein is Aspartyl/glutamyl-tRNA(Asn/Gln) amidotransferase subunit C.